A 197-amino-acid chain; its full sequence is Adenylyl-sulfate kinase (197 aa).

Residue Gly-33–Ser-40 coordinates ATP. Ser-107 functions as the Phosphoserine intermediate in the catalytic mechanism.

This sequence belongs to the APS kinase family.

The catalysed reaction is adenosine 5'-phosphosulfate + ATP = 3'-phosphoadenylyl sulfate + ADP + H(+). It functions in the pathway sulfur metabolism; hydrogen sulfide biosynthesis; sulfite from sulfate: step 2/3. Its function is as follows. Catalyzes the synthesis of activated sulfate. The protein is Adenylyl-sulfate kinase of Bacillus pumilus (strain SAFR-032).